The primary structure comprises 316 residues: Ribosomal RNA small subunit methyltransferase H (316 aa).

S-adenosyl-L-methionine contacts are provided by residues 42–44, D62, F86, D104, and Q111; that span reads GGH.

This sequence belongs to the methyltransferase superfamily. RsmH family.

It localises to the cytoplasm. It carries out the reaction cytidine(1402) in 16S rRNA + S-adenosyl-L-methionine = N(4)-methylcytidine(1402) in 16S rRNA + S-adenosyl-L-homocysteine + H(+). Functionally, specifically methylates the N4 position of cytidine in position 1402 (C1402) of 16S rRNA. This Polynucleobacter necessarius subsp. necessarius (strain STIR1) protein is Ribosomal RNA small subunit methyltransferase H.